Here is a 94-residue protein sequence, read N- to C-terminus: C-C motif chemokine 17 (94 aa).

The signal sequence occupies residues 1-23; it reads MAPLKMLALVILLLGASLQHIHA. Cystine bridges form between Cys-33-Cys-57 and Cys-34-Cys-73.

The protein belongs to the intercrine beta (chemokine CC) family.

It localises to the secreted. Functionally, chemokine, which displays chemotactic activity for T lymphocytes, preferentially Th2 cells, but not monocytes or granulocytes. Therefore plays an important role in a wide range of inflammatory and immunological processes. Acts by binding to CCR4 at T-cell surface. Mediates GM-CSF/CSF2-driven pain and inflammation. In the brain, required to maintain the typical, highly branched morphology of hippocampal microglia under homeostatic conditions. May be important for the appropriate adaptation of microglial morphology and synaptic plasticity to acute lipopolysaccharide (LPS)-induced neuroinflammation. Plays a role in wound healing, mainly by inducing fibroblast migration into the wound. The polypeptide is C-C motif chemokine 17 (CCL17) (Macaca mulatta (Rhesus macaque)).